Here is a 111-residue protein sequence, read N- to C-terminus: uncharacterized protein (111 aa).

Residues Val-64 to Leu-86 form a helical membrane-spanning segment.

The protein resides in the membrane. This is an uncharacterized protein from Saccharomyces cerevisiae (strain ATCC 204508 / S288c) (Baker's yeast).